A 449-amino-acid polypeptide reads, in one-letter code: Ribosomal protein uS12 methylthiotransferase RimO (449 aa).

The region spanning 5 to 116 (PTIAISHLGC…IVDVVQRVEN (112 aa)) is the MTTase N-terminal domain. [4Fe-4S] cluster-binding residues include cysteine 14, cysteine 50, cysteine 79, cysteine 154, cysteine 158, and cysteine 161. The Radical SAM core domain occupies 140 to 369 (TTTEGVAYLR…MEVQQPISIK (230 aa)). The TRAM domain occupies 372 to 438 (QNCIGQTVPV…VYDLYGKTNL (67 aa)).

It belongs to the methylthiotransferase family. RimO subfamily. It depends on [4Fe-4S] cluster as a cofactor.

Its subcellular location is the cytoplasm. It catalyses the reaction L-aspartate(89)-[ribosomal protein uS12]-hydrogen + (sulfur carrier)-SH + AH2 + 2 S-adenosyl-L-methionine = 3-methylsulfanyl-L-aspartate(89)-[ribosomal protein uS12]-hydrogen + (sulfur carrier)-H + 5'-deoxyadenosine + L-methionine + A + S-adenosyl-L-homocysteine + 2 H(+). Catalyzes the methylthiolation of an aspartic acid residue of ribosomal protein uS12. The sequence is that of Ribosomal protein uS12 methylthiotransferase RimO from Rippkaea orientalis (strain PCC 8801 / RF-1) (Cyanothece sp. (strain PCC 8801)).